The chain runs to 229 residues: MDKKRSSLKGSLLLLLLLVSDLLLCKSVASLPICPSGAVNCQVSLRELFDRAVILSHYIHNLSSEMFNEFDKRYAQGRGFVTKAINSCHTSSLSTPEDKEQAQQIHHEDLLNLILRVLRSWNDPLYHLVSEVRGMQEAPEAILSKAIEIEEQNRRLLEGMEKIVGQVQPRIKENEVYSVWSGLPSLQMADEDSRLFAFYNLLHCLRRDSHKIDNYLKLLKCRIVYDSNC.

A signal peptide spans 1-30 (MDKKRSSLKGSLLLLLLLVSDLLLCKSVAS). A disulfide bridge links cysteine 34 with cysteine 41. Serine 56 is subject to Phosphoserine. Asparagine 61 carries an N-linked (GlcNAc...) asparagine; partial glycan. A phosphoserine mark is found at serine 64 and serine 120. 2 disulfides stabilise this stretch: cysteine 88–cysteine 204 and cysteine 221–cysteine 229.

Belongs to the somatotropin/prolactin family. Interacts with PRLR.

Its subcellular location is the secreted. In terms of biological role, prolactin acts primarily on the mammary gland by promoting lactation. This Equus caballus (Horse) protein is Prolactin (PRL).